The following is a 425-amino-acid chain: Serine--tRNA ligase (425 aa).

228 to 230 contributes to the L-serine binding site; the sequence is TSE. 259–261 contributes to the ATP binding site; the sequence is RSE. E282 is an L-serine binding site. 346-349 contacts ATP; the sequence is EISS. S384 contributes to the L-serine binding site.

It belongs to the class-II aminoacyl-tRNA synthetase family. Type-1 seryl-tRNA synthetase subfamily. As to quaternary structure, homodimer. The tRNA molecule binds across the dimer.

It is found in the cytoplasm. The catalysed reaction is tRNA(Ser) + L-serine + ATP = L-seryl-tRNA(Ser) + AMP + diphosphate + H(+). It catalyses the reaction tRNA(Sec) + L-serine + ATP = L-seryl-tRNA(Sec) + AMP + diphosphate + H(+). It functions in the pathway aminoacyl-tRNA biosynthesis; selenocysteinyl-tRNA(Sec) biosynthesis; L-seryl-tRNA(Sec) from L-serine and tRNA(Sec): step 1/1. Catalyzes the attachment of serine to tRNA(Ser). Is also able to aminoacylate tRNA(Sec) with serine, to form the misacylated tRNA L-seryl-tRNA(Sec), which will be further converted into selenocysteinyl-tRNA(Sec). This chain is Serine--tRNA ligase, found in Ehrlichia ruminantium (strain Gardel).